Reading from the N-terminus, the 189-residue chain is MIESNESYSYGGDTIEPLGTLSGFDLVRRALEEARAAACAQGKDAGRGHVVPPVPFRVTDRRRNWSGPGPDVRDPQPLGKVAHDLAKKRGWSAQVAEGRVFGQWASMVGGQIADHAFPVGLNNGVLSVTAESTAWATQLRIMQAQLLAKIAAAVGNGVVTSLKITGPTAPSWRKGPWHIAGRGPRDTYG.

A disordered region spans residues 59–78 (TDRRRNWSGPGPDVRDPQPL).

Belongs to the UPF0232 family.

The polypeptide is UPF0232 protein MLBr00004 (Mycobacterium leprae (strain Br4923)).